The primary structure comprises 64 residues: Large ribosomal subunit protein bL35 (64 aa).

The segment covering Met1–Lys28 has biased composition (basic residues). The interval Met1–Ala51 is disordered.

Belongs to the bacterial ribosomal protein bL35 family.

The polypeptide is Large ribosomal subunit protein bL35 (Saccharophagus degradans (strain 2-40 / ATCC 43961 / DSM 17024)).